The sequence spans 244 residues: Probable transcriptional regulatory protein CBU_1566 (244 aa).

It belongs to the TACO1 family.

It is found in the cytoplasm. This Coxiella burnetii (strain RSA 493 / Nine Mile phase I) protein is Probable transcriptional regulatory protein CBU_1566.